A 187-amino-acid polypeptide reads, in one-letter code: MNLQHHFLIAMPSLQDPQFKRSVIYICEHGEKGAMGLVINKPLEQLTVETILEKLKIKSPSRDPAIRLDNVVLAGGPLAEDRGFILHSPQEGFASSIHISPETMITTSKDVLETLGTSGQPKNLLVALGYASWRQGQLEQELLDNVWLTTEADTHILFNTPIAERWQAAANKLGINIFNIAPQAGHA.

Belongs to the UPF0301 (AlgH) family.

This is UPF0301 protein YPO0936/y3322/YP_3506 from Yersinia pestis.